We begin with the raw amino-acid sequence, 492 residues long: Aerolysin-4 (492 aa).

A signal peptide spans 1-23 (MKKLKITGLSLIISGLLMAQAQA). Disulfide bonds link C42–C98 and C182–C187. The segment at 68–84 (WQISGLANGWVIMGPGY) is interaction with host N-linked glycan. Residues 256 to 288 (YGLSEKVTTKNKFKWPLVGETELSIEIAANQSW) are part of the transmembrane beta-barrel after proteolytic activation of the toxin and insertion into the host membrane. The interaction with glycans from host GPI-anchor stretch occupies residues 346-355 (RWGGNAWYTH). A propeptide spanning residues 446–492 (AAASHSSRARNLSAGQGLRLEIPLDAQELSGLGFNNVSLSVTPAANQ) is cleaved from the precursor.

This sequence belongs to the aerolysin family. In terms of assembly, homodimer in solution; homoheptamer in the host membrane. After binding to GPI-anchored proteins in target membranes and proteolytic removal of the C-terminal propeptide, the protein assembles into a heptameric pre-pore complex. A further conformation change leads to insertion into the host membrane. Proteolytic cleavage and subsequent release of the propeptide trigger a major conformation change, leading to the formation of a heptameric pre-pore that then inserts into the host membrane.

It localises to the secreted. Its subcellular location is the host cell membrane. In terms of biological role, secreted, cytolytic toxin that forms pores in host membranes after proteolytic removal of a C-terminal propeptide, leading to destruction of the membrane permeability barrier and cell death. The pores are formed by transmembrane beta-strands and are approximately 3 nm in diameter. This Aeromonas hydrophila protein is Aerolysin-4 (ahh4).